A 352-amino-acid polypeptide reads, in one-letter code: Cyclin-O (352 aa).

Residues 1-40 (MVTPCPASPGSPAAGAGRRDSHQNLRAPVKKSRRPCLRRK) form a disordered region. The segment covering 28–40 (PVKKSRRPCLRRK) has biased composition (basic residues). Position 83 is a phosphoserine (Ser83).

Belongs to the cyclin family. Present in respiratory cells (at protein level). Expressed in multiciliated tissue in brain and fallopian tube (at protein level). Highly expressed in oocytes.

It is found in the cytoplasm. The protein resides in the nucleus. It localises to the nucleolus. Its function is as follows. Specifically required for generation of multiciliated cells, possibly by promoting a cell cycle state compatible with centriole amplification and maturation. Acts downstream of MCIDAS to promote mother centriole amplification and maturation in preparation for apical docking. May be involved in apoptosis in lymphoid cells; however, this result requires additional evidences in vivo. May be involved in oocyte meiotic resumption in oocytes. This Mus musculus (Mouse) protein is Cyclin-O.